A 534-amino-acid chain; its full sequence is Serine/threonine-protein kinase ppk15 (534 aa).

Positions 1–40 are disordered; sequence MDSDSPILPLSNNPPAARTHDHSQRNNHARHVSSSGTTLF. Phosphoserine occurs at positions 33, 56, and 60. Residues 85-104 are disordered; it reads FSSEQNPRRPLTKPSEGVHN. The region spanning 130–458 is the Protein kinase domain; sequence YLILDTLGHG…PDQAKNHPFI (329 aa). ATP is bound by residues 136–144 and K159; that span reads LGHGTFGQV. Catalysis depends on D257, which acts as the Proton acceptor. Phosphotyrosine is present on Y291.

The protein belongs to the protein kinase superfamily. Ser/Thr protein kinase family.

Its subcellular location is the cytoplasm. The protein resides in the cytoskeleton. The protein localises to the microtubule organizing center. It is found in the spindle pole body. It catalyses the reaction L-seryl-[protein] + ATP = O-phospho-L-seryl-[protein] + ADP + H(+). The enzyme catalyses L-threonyl-[protein] + ATP = O-phospho-L-threonyl-[protein] + ADP + H(+). The chain is Serine/threonine-protein kinase ppk15 (ppk15) from Schizosaccharomyces pombe (strain 972 / ATCC 24843) (Fission yeast).